The sequence spans 735 residues: Muskelin (735 aa).

Ala2 bears the N-acetylalanine mark. A LisH domain is found at 172–204 (REQEAIRLCLKHFRQHNYTEAFESLQKKTKIAL). Residues 206-258 (HPMLTDIHDKLVLKGDFDACEELIEKAVNDGLFNQYISQQEYKPRWSQIIPKS) enclose the CTLH domain. Kelch repeat units follow at residues 284-330 (TVYL…SCHK), 339-391 (QIYT…FDHQ), 408-458 (ILTC…SRIG), 469-515 (CLYV…TGFT), 526-578 (EIHV…SLQE), and 597-651 (VHYL…AQVD).

Homodimer; may form higher oligomers. Identified in the CTLH complex that contains GID4, RANBP9 and/or RANBP10, MKLN1, MAEA, RMND5A (or alternatively its paralog RMND5B), GID8, ARMC8, WDR26 and YPEL5. Within this complex, MAEA, RMND5A (or alternatively its paralog RMND5B), GID8, WDR26, and RANBP9 and/or RANBP10 form the catalytic core, while GID4, MKLN1, ARMC8 and YPEL5 have ancillary roles. Interacts with RANBP9. Part of a complex consisting of RANBP9, MKLN1 and GID8. Interacts with GABRA1. Interacts with the C-terminal tail of PTGER3.

Its subcellular location is the cytoplasm. It localises to the cytosol. The protein localises to the nucleus. It is found in the nucleoplasm. The protein resides in the cell projection. Its subcellular location is the ruffle. It localises to the cell cortex. The protein localises to the synapse. It is found in the postsynapse. Its function is as follows. Component of the CTLH E3 ubiquitin-protein ligase complex that selectively accepts ubiquitin from UBE2H and mediates ubiquitination and subsequent proteasomal degradation of the transcription factor HBP1. Required for internalization of the GABA receptor GABRA1 from the cell membrane via endosomes and subsequent GABRA1 degradation. Acts as a mediator of cell spreading and cytoskeletal responses to the extracellular matrix component THBS1. This Homo sapiens (Human) protein is Muskelin (MKLN1).